The following is a 599-amino-acid chain: Elongation factor 4 (599 aa).

A tr-type G domain is found at 2–184 (KNIRNFSIIA…RLVRDIPPPE (183 aa)). GTP-binding positions include 14 to 19 (DHGKST) and 131 to 134 (NKID).

This sequence belongs to the TRAFAC class translation factor GTPase superfamily. Classic translation factor GTPase family. LepA subfamily.

Its subcellular location is the cell inner membrane. The catalysed reaction is GTP + H2O = GDP + phosphate + H(+). Functionally, required for accurate and efficient protein synthesis under certain stress conditions. May act as a fidelity factor of the translation reaction, by catalyzing a one-codon backward translocation of tRNAs on improperly translocated ribosomes. Back-translocation proceeds from a post-translocation (POST) complex to a pre-translocation (PRE) complex, thus giving elongation factor G a second chance to translocate the tRNAs correctly. Binds to ribosomes in a GTP-dependent manner. The chain is Elongation factor 4 from Escherichia coli (strain UTI89 / UPEC).